A 417-amino-acid polypeptide reads, in one-letter code: Gamma-glutamyl phosphate reductase (417 aa).

The protein belongs to the gamma-glutamyl phosphate reductase family.

The protein resides in the cytoplasm. It catalyses the reaction L-glutamate 5-semialdehyde + phosphate + NADP(+) = L-glutamyl 5-phosphate + NADPH + H(+). The protein operates within amino-acid biosynthesis; L-proline biosynthesis; L-glutamate 5-semialdehyde from L-glutamate: step 2/2. Catalyzes the NADPH-dependent reduction of L-glutamate 5-phosphate into L-glutamate 5-semialdehyde and phosphate. The product spontaneously undergoes cyclization to form 1-pyrroline-5-carboxylate. This Klebsiella pneumoniae (strain 342) protein is Gamma-glutamyl phosphate reductase.